The sequence spans 806 residues: Acetyl-CoA decarbonylase/synthase complex subunit alpha 1 (806 aa).

Cys73, Cys76, Cys77, Cys79, Cys84, and Cys94 together coordinate [4Fe-4S] cluster. His117 lines the CO pocket. The [Ni-4Fe-4S] cluster site is built by His250, Cys278, and Cys323. 4Fe-4S ferredoxin-type domains are found at residues 407–436 and 446–475; these read DEEF…IPEA and SYLD…LNII. The [4Fe-4S] cluster site is built by Cys417, Cys420, Cys423, Cys427, Cys455, Cys458, Cys461, and Cys465. The [Ni-4Fe-4S] cluster site is built by Cys523, Cys552, and Cys587.

This sequence belongs to the Ni-containing carbon monoxide dehydrogenase family. As to quaternary structure, heterotetramer of two alpha and two epsilon subunits. The ACDS complex is made up of alpha, epsilon, beta, gamma and delta subunits with a probable stoichiometry of (alpha(2)epsilon(2))(4)-beta(8)-(gamma(1)delta(1))(8). [4Fe-4S] cluster is required as a cofactor. Requires [Ni-4Fe-4S] cluster as cofactor.

It catalyses the reaction CO + 2 oxidized [2Fe-2S]-[ferredoxin] + H2O = 2 reduced [2Fe-2S]-[ferredoxin] + CO2 + 2 H(+). It participates in one-carbon metabolism; methanogenesis from acetate. Its activity is regulated as follows. Carbon monoxide dehydrogenase activity is inhibited by KCN and is rapidly inactivated by O(2). Its function is as follows. Part of the ACDS complex that catalyzes the reversible cleavage of acetyl-CoA, allowing growth on acetate as sole source of carbon and energy. The alpha-epsilon subcomponent functions as a carbon monoxide dehydrogenase. The polypeptide is Acetyl-CoA decarbonylase/synthase complex subunit alpha 1 (Methanosarcina barkeri (strain Fusaro / DSM 804)).